A 175-amino-acid chain; its full sequence is ATP synthase subunit b (175 aa).

A helical membrane pass occupies residues 19 to 39; it reads LVVGTIAFALLVFVLLKFVMP.

This sequence belongs to the ATPase B chain family. F-type ATPases have 2 components, F(1) - the catalytic core - and F(0) - the membrane proton channel. F(1) has five subunits: alpha(3), beta(3), gamma(1), delta(1), epsilon(1). F(0) has three main subunits: a(1), b(2) and c(10-14). The alpha and beta chains form an alternating ring which encloses part of the gamma chain. F(1) is attached to F(0) by a central stalk formed by the gamma and epsilon chains, while a peripheral stalk is formed by the delta and b chains.

The protein localises to the cell membrane. Its function is as follows. F(1)F(0) ATP synthase produces ATP from ADP in the presence of a proton or sodium gradient. F-type ATPases consist of two structural domains, F(1) containing the extramembraneous catalytic core and F(0) containing the membrane proton channel, linked together by a central stalk and a peripheral stalk. During catalysis, ATP synthesis in the catalytic domain of F(1) is coupled via a rotary mechanism of the central stalk subunits to proton translocation. Component of the F(0) channel, it forms part of the peripheral stalk, linking F(1) to F(0). This chain is ATP synthase subunit b, found in Salinispora tropica (strain ATCC BAA-916 / DSM 44818 / JCM 13857 / NBRC 105044 / CNB-440).